A 459-amino-acid polypeptide reads, in one-letter code: Glycosyl hydrolase family 109 protein (459 aa).

Residues 1–31 (MHNIHRRNFLKAAGAATAGLVTANIALNAYA) constitute a signal peptide (tat-type signal). Residues 64-65 (ER), Asp-86, 135-138 (WEWH), 155-156 (EV), and Asn-184 contribute to the NAD(+) site. Substrate-binding positions include Tyr-213, Arg-232, 244–247 (YPTH), and Tyr-326. Tyr-244 provides a ligand contact to NAD(+).

The protein belongs to the Gfo/Idh/MocA family. Glycosyl hydrolase 109 subfamily. NAD(+) serves as cofactor. Predicted to be exported by the Tat system. The position of the signal peptide cleavage has not been experimentally proven.

Its function is as follows. Glycosidase. The protein is Glycosyl hydrolase family 109 protein of Shewanella baltica (strain OS195).